Here is a 547-residue protein sequence, read N- to C-terminus: Intercellular adhesion molecule 3 (547 aa).

The signal sequence occupies residues M1 to G29. At Q30–H485 the chain is on the extracellular side. The Ig-like C2-type 1 domain maps to G46 to S103. N52, N84, N87, N101, N110, and N134 each carry an N-linked (GlcNAc...) asparagine glycan. 2 disulfide bridges follow: C53–C96 and C57–C100. Residues G132–Q197 form the Ig-like C2-type 2 domain. A disulfide bond links C139 and C190. N-linked (GlcNAc...) asparagine glycosylation is found at N206, N264, N295, N308, N320, N363, N389, N453, and N457. In terms of domain architecture, Ig-like C2-type 3 spans E234–E301. C241 and C294 form a disulfide bridge. The 54-residue stretch at G329 to D382 folds into the Ig-like C2-type 4 domain. The cysteines at positions 336 and 375 are disulfide-linked. In terms of domain architecture, Ig-like C2-type 5 spans K416 to G469. C423 and C462 form a disulfide bridge. The helical transmembrane segment at F486 to F510 threads the bilayer. Residues R511–E547 are Cytoplasmic-facing.

It belongs to the immunoglobulin superfamily. ICAM family. Interacts with moesin/MSN. In terms of processing, upon stimulation by a physiologic stimuli becomes rapidly and transiently phosphorylated on serine residues. In terms of tissue distribution, leukocytes.

It localises to the membrane. Functionally, ICAM proteins are ligands for the leukocyte adhesion protein LFA-1 (integrin alpha-L/beta-2). ICAM3 is also a ligand for integrin alpha-D/beta-2. In association with integrin alpha-L/beta-2, contributes to apoptotic neutrophil phagocytosis by macrophages. The sequence is that of Intercellular adhesion molecule 3 (ICAM3) from Pan troglodytes (Chimpanzee).